The primary structure comprises 270 residues: Phospholysine phosphohistidine inorganic pyrophosphate phosphatase (270 aa).

Mg(2+) contacts are provided by D17 and S19. Substrate is bound by residues 17–19 (DIS), 54–55 (TN), and K189. D214 contributes to the Mg(2+) binding site.

The protein belongs to the HAD-like hydrolase superfamily. In terms of assembly, homodimer. It depends on Mg(2+) as a cofactor.

Its subcellular location is the cytoplasm. It localises to the nucleus. It catalyses the reaction diphosphate + H2O = 2 phosphate + H(+). Phosphatase that hydrolyzes imidodiphosphate, 3-phosphohistidine and 6-phospholysine. Has broad substrate specificity and can also hydrolyze inorganic diphosphate, but with lower efficiency. This Rattus norvegicus (Rat) protein is Phospholysine phosphohistidine inorganic pyrophosphate phosphatase (Lhpp).